The sequence spans 471 residues: Heparan-sulfate 6-O-sulfotransferase 3 (471 aa).

The Cytoplasmic portion of the chain corresponds to 1–4 (MDER). Residues 5–27 (FNKWLLTPVLTLLFVVIMYQYVS) form a helical; Signal-anchor for type II membrane protein membrane-spanning segment. Over 28–471 (PSCTSSCTNF…EDYNSQVVRW (444 aa)) the chain is Lumenal. The interval 39 to 122 (EQPRAGEAGP…EAPENGSLPR (84 aa)) is disordered. Low complexity predominate over residues 41-62 (PRAGEAGPPAVPGPARRAQAPP). A compositionally biased stretch (pro residues) spans 70–81 (QLPPPPRGPPEG). Residues 88–114 (PEEEDEEPGDPREGEEEEEEDEPDPEA) show a composition bias toward acidic residues. N-linked (GlcNAc...) asparagine glycosylation is found at Asn117 and Asn128. 152 to 160 (HIQKTGGTT) serves as a coordination point for 3'-phosphoadenylyl sulfate. Substrate is bound by residues 182 to 183 (KK), Arg199, Trp204, and His209. His209 functions as the Proton acceptor in the catalytic mechanism. Residue Asn231 is glycosylated (N-linked (GlcNAc...) asparagine). Arg245 and Ser253 together coordinate 3'-phosphoadenylyl sulfate. The substrate site is built by His257 and Trp264. Residues Asn324 and Asn329 are each glycosylated (N-linked (GlcNAc...) asparagine). 377–379 (TQF) serves as a coordination point for 3'-phosphoadenylyl sulfate. The N-linked (GlcNAc...) asparagine glycan is linked to Asn380. Residue 383–384 (RA) coordinates 3'-phosphoadenylyl sulfate. A disordered region spans residues 422-471 (TKQLEHQRDRQKRREERRLQREHRDHQWPKEDGAAEGTVTEDYNSQVVRW). The span at 423-454 (KQLEHQRDRQKRREERRLQREHRDHQWPKEDG) shows a compositional bias: basic and acidic residues. Residues 462-471 (EDYNSQVVRW) show a composition bias toward polar residues.

Belongs to the sulfotransferase 6 family.

Its subcellular location is the membrane. It carries out the reaction alpha-D-glucosaminyl-[heparan sulfate](n) + 3'-phosphoadenylyl sulfate = 6-sulfo-alpha-D-glucosaminyl-[heparan sulfate](n) + adenosine 3',5'-bisphosphate + H(+). Functionally, 6-O-sulfation enzyme which catalyzes the transfer of sulfate from 3'-phosphoadenosine 5'-phosphosulfate (PAPS) to position 6 of the N-sulfoglucosamine residue (GlcNS) of heparan sulfate. The sequence is that of Heparan-sulfate 6-O-sulfotransferase 3 (HS6ST3) from Homo sapiens (Human).